A 159-amino-acid chain; its full sequence is FCS-Like Zinc finger 2 (159 aa).

Residues His75–Glu119 form an FLZ-type zinc finger. A compositionally biased stretch (basic and acidic residues) spans Glu113–Gln122. The interval Glu113 to Ala159 is disordered.

This sequence belongs to the FLZ family. In terms of assembly, interacts with KIN10 and KIN11 via its FLZ-type zinc finger domain. Interacts with KINB1, KINB2, KINB3 and SNF4 via its N-terminal part. Forms heterodimer with FLZ7, FLZ10, FLZ11, FLZ12, FLZ15, FLZ17 and FLZ18 in vitro.

May act as an adapter to facilitate the interaction of SnRK1 complex with effector proteins, conferring tissue- and stimulus-type specific differences in the SnRK1 regulation pathway. This Arabidopsis thaliana (Mouse-ear cress) protein is FCS-Like Zinc finger 2.